The chain runs to 1295 residues: DNA-directed RNA polymerase subunit beta' (1295 aa).

Cysteine 60, cysteine 62, cysteine 75, and cysteine 78 together coordinate Zn(2+). Positions 516, 518, and 520 each coordinate Mg(2+). 4 residues coordinate Zn(2+): cysteine 841, cysteine 914, cysteine 921, and cysteine 924.

Belongs to the RNA polymerase beta' chain family. In terms of assembly, the RNAP catalytic core consists of 2 alpha, 1 beta, 1 beta' and 1 omega subunit. When a sigma factor is associated with the core the holoenzyme is formed, which can initiate transcription. Mg(2+) is required as a cofactor. The cofactor is Zn(2+).

The enzyme catalyses RNA(n) + a ribonucleoside 5'-triphosphate = RNA(n+1) + diphosphate. Its function is as follows. DNA-dependent RNA polymerase catalyzes the transcription of DNA into RNA using the four ribonucleoside triphosphates as substrates. The polypeptide is DNA-directed RNA polymerase subunit beta' (Dehalococcoides mccartyi (strain ATCC BAA-2100 / JCM 16839 / KCTC 5957 / BAV1)).